The following is a 109-amino-acid chain: MKLSIIIIATSLVIAVVAFPSKDSKAIENDKTEQRMEIVVQETARACSKQIGDKCKRNCECYGKTVVCGTIYVGGKEVNQCMDKTSDSAILNGLGKGMNFIENTFSFCV.

The N-terminal stretch at 1-18 is a signal peptide; that stretch reads MKLSIIIIATSLVIAVVA. The propeptide occupies 19–46; it reads FPSKDSKAIENDKTEQRMEIVVQETARA. 3 disulfide bridges follow: Cys55–Cys68, Cys59–Cys108, and Cys61–Cys81.

This sequence belongs to the neurotoxin 25 family. F7 subfamily. Expressed by the venom gland.

It localises to the secreted. In terms of biological role, putative ion channel inhibitor. This chain is Hainantoxin-XVIII-4, found in Cyriopagopus hainanus (Chinese bird spider).